The primary structure comprises 204 residues: Methylthioribulose-1-phosphate dehydratase (204 aa).

Residues His-94 and His-96 each coordinate Zn(2+).

Belongs to the aldolase class II family. MtnB subfamily. Zn(2+) serves as cofactor.

The enzyme catalyses 5-(methylsulfanyl)-D-ribulose 1-phosphate = 5-methylsulfanyl-2,3-dioxopentyl phosphate + H2O. Its pathway is amino-acid biosynthesis; L-methionine biosynthesis via salvage pathway; L-methionine from S-methyl-5-thio-alpha-D-ribose 1-phosphate: step 2/6. In terms of biological role, catalyzes the dehydration of methylthioribulose-1-phosphate (MTRu-1-P) into 2,3-diketo-5-methylthiopentyl-1-phosphate (DK-MTP-1-P). The protein is Methylthioribulose-1-phosphate dehydratase of Cronobacter sakazakii (strain ATCC BAA-894) (Enterobacter sakazakii).